Consider the following 180-residue polypeptide: Large ribosomal subunit protein uL6 (180 aa).

The protein belongs to the universal ribosomal protein uL6 family. In terms of assembly, part of the 50S ribosomal subunit.

Functionally, this protein binds to the 23S rRNA, and is important in its secondary structure. It is located near the subunit interface in the base of the L7/L12 stalk, and near the tRNA binding site of the peptidyltransferase center. The chain is Large ribosomal subunit protein uL6 from Salinispora tropica (strain ATCC BAA-916 / DSM 44818 / JCM 13857 / NBRC 105044 / CNB-440).